Reading from the N-terminus, the 375-residue chain is uncharacterized protein (375 aa).

At 1 to 2 (MR) the chain is on the cytoplasmic side. Residues 3 to 23 (WYSYVIPAVILSIIAISGVWW) form a helical; Signal-anchor for type II membrane protein membrane-spanning segment. The Lumenal segment spans residues 24 to 375 (NATLGTRLDQ…YIEQRLFPQP (352 aa)).

This sequence belongs to the glycosyltransferase 34 family.

Its subcellular location is the endoplasmic reticulum membrane. The protein localises to the golgi apparatus membrane. This is an uncharacterized protein from Schizosaccharomyces pombe (strain 972 / ATCC 24843) (Fission yeast).